We begin with the raw amino-acid sequence, 233 residues long: Phosphoglycolate phosphatase 2 (233 aa).

Catalysis depends on D13, which acts as the Nucleophile. Residues D13 and D15 each contribute to the Mg(2+) site. K152 lines the substrate pocket. Residues D174 and D178 each contribute to the Mg(2+) site.

The protein belongs to the archaeal SPP-like hydrolase family. Mg(2+) is required as a cofactor.

It catalyses the reaction 2-phosphoglycolate + H2O = glycolate + phosphate. Catalyzes the dephosphorylation of 2-phosphoglycolate. The polypeptide is Phosphoglycolate phosphatase 2 (Saccharolobus solfataricus (strain ATCC 35092 / DSM 1617 / JCM 11322 / P2) (Sulfolobus solfataricus)).